The primary structure comprises 317 residues: Ribosomal protein L11 methyltransferase (317 aa).

Thr158, Gly179, Asp201, and Asn244 together coordinate S-adenosyl-L-methionine.

The protein belongs to the methyltransferase superfamily. PrmA family.

The protein localises to the cytoplasm. The catalysed reaction is L-lysyl-[protein] + 3 S-adenosyl-L-methionine = N(6),N(6),N(6)-trimethyl-L-lysyl-[protein] + 3 S-adenosyl-L-homocysteine + 3 H(+). Methylates ribosomal protein L11. This Streptococcus pyogenes serotype M1 protein is Ribosomal protein L11 methyltransferase.